A 397-amino-acid polypeptide reads, in one-letter code: Lymphoid enhancer-binding factor 1 (397 aa).

Residues 1-60 (MPQLSGGGGGGDPELCATDEMIPFKDEGDPQKEKIFAEISHPEEEGDLADIKSSLVNESE) are CTNNB1-binding. Lysine 25 participates in a covalent cross-link: Glycyl lysine isopeptide (Lys-Gly) (interchain with G-Cter in SUMO). Positions 59 to 102 (SEIIPASNGHEVVRQAPSSQEPYHDKAREHPDEGKHPDGGLYNK) are disordered. A compositionally biased stretch (basic and acidic residues) spans 80 to 96 (PYHDKAREHPDEGKHPD). Serine 130 is modified (phosphoserine). Threonine 153 carries the phosphothreonine; by NLK modification. Residue serine 164 is modified to Phosphoserine; by NLK. 2 disordered regions span residues 164–191 (SPGS…APEI) and 266–296 (VKQE…KRPH). Lysine 267 participates in a covalent cross-link: Glycyl lysine isopeptide (Lys-Gly) (interchain with G-Cter in SUMO). Positions 267–294 (KQEHPHTDSDLMHVKPQHEQRKEQEPKR) are enriched in basic and acidic residues. Positions 297-365 (IKKPLNAFML…LHMQLYPGWS (69 aa)) form a DNA-binding region, HMG box. A disordered region spans residues 367–397 (RDNYGKKKKRKREKLQESTSGTGPRMTAAYI).

The protein belongs to the TCF/LEF family. Binds the armadillo repeat of CTNNB1 and forms a stable complex. Binds TLE1, ALYREF/THOC4, MDFI and MDFIC. Interacts with NLK. Interacts with EP300 and PIASG. Interacts with DAZAP2. In terms of processing, phosphorylated at Thr-153 and/or Ser-164 by NLK. Phosphorylation by NLK at these sites represses LEF1-mediated transcriptional activation of target genes of the canonical Wnt signaling pathway. Expressed in Vgamma1.1 and Vgamma2 gamma-delta T-cells, however not expressed in gamma-delta thymocytes fated for Il17a expression (at protein level). Expressed in alpha-beta T-cell lineages. Expressed in the thymus. Found in distinct epithelial cell compartments of the skin and is abundant in the hair-producing progenitors of the follicle.

It localises to the nucleus. Transcription factor that binds DNA in a sequence-specific manner. Participates in the Wnt signaling pathway. Activates transcription of target genes in the presence of CTNNB1 and EP300. PIASG antagonizes both Wnt-dependent and Wnt-independent activation by LEF1. TLE1, TLE2, TLE3 and TLE4 repress transactivation mediated by LEF1 and CTNNB1. Regulates T-cell receptor alpha enhancer function. Required for IL17A expressing gamma-delta T-cell maturation and development, via binding to regulator loci of BLK to modulate expression. Acts as a positive regulator of odontoblast differentiation during mesenchymal tooth germ formation, expression is repressed during the bell stage by MSX1-mediated inhibition of CTNNB1 signaling. May play a role in hair cell differentiation and follicle morphogenesis. The protein is Lymphoid enhancer-binding factor 1 of Mus musculus (Mouse).